We begin with the raw amino-acid sequence, 473 residues long: Siroheme synthase (473 aa).

Residues 1–203 are precorrin-2 dehydrogenase /sirohydrochlorin ferrochelatase; sequence MQYLPIFTKL…GDTQAAEQQL (203 aa). NAD(+) contacts are provided by residues 22-23 and 43-44; these read DV and PK. Serine 128 carries the post-translational modification Phosphoserine. Residues 215–473 are uroporphyrinogen-III C-methyltransferase; sequence GEVYVVGAGP…SFAQPLTDVA (259 aa). Proline 224 is an S-adenosyl-L-methionine binding site. Aspartate 247 functions as the Proton acceptor in the catalytic mechanism. Lysine 269 acts as the Proton donor in catalysis. Residues 300-302, isoleucine 305, 330-331, methionine 382, and glycine 411 each bind S-adenosyl-L-methionine; these read GGD and TA.

In the N-terminal section; belongs to the precorrin-2 dehydrogenase / sirohydrochlorin ferrochelatase family. This sequence in the C-terminal section; belongs to the precorrin methyltransferase family.

It carries out the reaction uroporphyrinogen III + 2 S-adenosyl-L-methionine = precorrin-2 + 2 S-adenosyl-L-homocysteine + H(+). The catalysed reaction is precorrin-2 + NAD(+) = sirohydrochlorin + NADH + 2 H(+). The enzyme catalyses siroheme + 2 H(+) = sirohydrochlorin + Fe(2+). The protein operates within cofactor biosynthesis; adenosylcobalamin biosynthesis; precorrin-2 from uroporphyrinogen III: step 1/1. Its pathway is cofactor biosynthesis; adenosylcobalamin biosynthesis; sirohydrochlorin from precorrin-2: step 1/1. It participates in porphyrin-containing compound metabolism; siroheme biosynthesis; precorrin-2 from uroporphyrinogen III: step 1/1. It functions in the pathway porphyrin-containing compound metabolism; siroheme biosynthesis; siroheme from sirohydrochlorin: step 1/1. The protein operates within porphyrin-containing compound metabolism; siroheme biosynthesis; sirohydrochlorin from precorrin-2: step 1/1. In terms of biological role, multifunctional enzyme that catalyzes the SAM-dependent methylations of uroporphyrinogen III at position C-2 and C-7 to form precorrin-2 via precorrin-1. Then it catalyzes the NAD-dependent ring dehydrogenation of precorrin-2 to yield sirohydrochlorin. Finally, it catalyzes the ferrochelation of sirohydrochlorin to yield siroheme. This Pseudoalteromonas translucida (strain TAC 125) protein is Siroheme synthase.